The primary structure comprises 95 residues: Small ribosomal subunit protein uS15 (95 aa).

This sequence belongs to the universal ribosomal protein uS15 family. In terms of assembly, part of the 30S ribosomal subunit. Forms a bridge to the 50S subunit in the 70S ribosome, contacting the 23S rRNA.

In terms of biological role, one of the primary rRNA binding proteins, it binds directly to 16S rRNA where it helps nucleate assembly of the platform of the 30S subunit by binding and bridging several RNA helices of the 16S rRNA. Functionally, forms an intersubunit bridge (bridge B4) with the 23S rRNA of the 50S subunit in the ribosome. The chain is Small ribosomal subunit protein uS15 from Streptomyces coelicolor (strain ATCC BAA-471 / A3(2) / M145).